The chain runs to 129 residues: D-ribose pyranase 1 (129 aa).

His-20 (proton donor) is an active-site residue. Substrate contacts are provided by residues Asp-28, His-96, and 118–120; that span reads YSN.

Belongs to the RbsD / FucU family. RbsD subfamily. In terms of assembly, homodecamer.

It localises to the cytoplasm. It catalyses the reaction beta-D-ribopyranose = beta-D-ribofuranose. It participates in carbohydrate metabolism; D-ribose degradation; D-ribose 5-phosphate from beta-D-ribopyranose: step 1/2. Its function is as follows. Catalyzes the interconversion of beta-pyran and beta-furan forms of D-ribose. This is D-ribose pyranase 1 from Rubrobacter xylanophilus (strain DSM 9941 / JCM 11954 / NBRC 16129 / PRD-1).